Reading from the N-terminus, the 1164-residue chain is DNA-directed RNA polymerase 133 kDa polypeptide (1164 aa).

It belongs to the RNA polymerase beta chain family. In terms of assembly, the DNA-dependent RNA polymerase used for intermediate and late genes expression consists of eight subunits 147 kDa, 133 kDa, 35 kDa, 30 kDa, 22 kDa, 19 kDa, 18 kDa and 7 kDa totalling more than 500 kDa in mass. The same holoenzyme, with the addition of the transcription-specificity factor RAP94, is used for early gene expression.

Its subcellular location is the virion. It catalyses the reaction RNA(n) + a ribonucleoside 5'-triphosphate = RNA(n+1) + diphosphate. In terms of biological role, part of the DNA-dependent RNA polymerase which catalyzes the transcription of viral DNA into RNA using the four ribonucleoside triphosphates as substrates. Responsible for the transcription of early, intermediate and late genes. DNA-dependent RNA polymerase associates with the early transcription factor (ETF), itself composed of OPG118 and OPG133, thereby allowing the early genes transcription. Late transcription, and probably also intermediate transcription, require newly synthesized RNA polymerase. This is DNA-directed RNA polymerase 133 kDa polypeptide (OPG151) from Homo sapiens (Human).